Consider the following 61-residue polypeptide: Large ribosomal subunit protein uL30 (61 aa).

Belongs to the universal ribosomal protein uL30 family. As to quaternary structure, part of the 50S ribosomal subunit.

The sequence is that of Large ribosomal subunit protein uL30 from Chromohalobacter salexigens (strain ATCC BAA-138 / DSM 3043 / CIP 106854 / NCIMB 13768 / 1H11).